A 338-amino-acid chain; its full sequence is Glycerol-3-phosphate dehydrogenase [NAD(P)+] (338 aa).

Ser14, Tyr15, His35, and Lys109 together coordinate NADPH. Positions 109, 138, and 140 each coordinate sn-glycerol 3-phosphate. Ala142 lines the NADPH pocket. 5 residues coordinate sn-glycerol 3-phosphate: Lys194, Asp247, Ser257, Arg258, and Asn259. Lys194 acts as the Proton acceptor in catalysis. Arg258 contributes to the NADPH binding site. 2 residues coordinate NADPH: Val282 and Glu284.

It belongs to the NAD-dependent glycerol-3-phosphate dehydrogenase family.

The protein resides in the cytoplasm. It carries out the reaction sn-glycerol 3-phosphate + NAD(+) = dihydroxyacetone phosphate + NADH + H(+). The catalysed reaction is sn-glycerol 3-phosphate + NADP(+) = dihydroxyacetone phosphate + NADPH + H(+). The protein operates within membrane lipid metabolism; glycerophospholipid metabolism. Functionally, catalyzes the reduction of the glycolytic intermediate dihydroxyacetone phosphate (DHAP) to sn-glycerol 3-phosphate (G3P), the key precursor for phospholipid synthesis. This is Glycerol-3-phosphate dehydrogenase [NAD(P)+] from Shewanella sp. (strain MR-4).